The following is a 342-amino-acid chain: Inositol-tetrakisphosphate 1-kinase 1 (342 aa).

Residues Lys-28 and Lys-70 each coordinate 1D-myo-inositol 6-phosphate. ATP contacts are provided by Arg-105 and Lys-155. One can recognise an ATP-grasp domain in the interval 116–332; that stretch reads DHAADQDSTF…HKDGVGNQQE (217 aa). 1D-myo-inositol 6-phosphate-binding residues include Gly-161 and His-166. Positions 166, 187, and 190 each coordinate ATP. Positions 198 and 200 each coordinate 1D-myo-inositol 6-phosphate. Ser-213 contacts ATP. Residues 219 to 247 form a catalytic specificity elements (CSE) region; it reads PEDDASAQGSVSFSQVSNLPTERTAEEYY. Asn-280 contacts 1D-myo-inositol 6-phosphate. A Mg(2+)-binding site is contributed by Asp-282. 3 residues coordinate ATP: Ile-296, Asp-297, and Asn-299. Mg(2+)-binding residues include Asp-297 and Asn-299. 1D-myo-inositol 6-phosphate-binding residues include Asn-299, Gly-303, and Lys-306.

This sequence belongs to the ITPK1 family. In terms of assembly, monomer. Mg(2+) is required as a cofactor. In terms of tissue distribution, expressed in the embryo of 15 day after pollination. Expressed in kernels at earlier stages but at very low levels. Expression in the embryo peaks at 15 days after pollination and then declines. No expression is detected from endosperm and vegetative tissues.

It catalyses the reaction 1D-myo-inositol 3,4,5,6-tetrakisphosphate + ATP = 1D-myo-inositol 1,3,4,5,6-pentakisphosphate + ADP + H(+). It carries out the reaction 1D-myo-inositol 1,3,4-trisphosphate + ATP = 1D-myo-inositol 1,3,4,5-tetrakisphosphate + ADP + H(+). The enzyme catalyses 1D-myo-inositol 1,3,4-trisphosphate + ATP = 1D-myo-inositol 1,3,4,6-tetrakisphosphate + ADP + H(+). The catalysed reaction is 1D-myo-inositol 1,2,3,4,5-pentakisphosphate + ATP = 3-diphospho-1D-myo-inositol 1,2,4,5-tetrakisphosphate + ADP. It catalyses the reaction 1D-myo-inositol hexakisphosphate + ATP = 5-diphospho-1D-myo-inositol 1,2,3,4,6-pentakisphosphate + ADP. Its function is as follows. Kinase that can phosphorylate various inositol polyphosphate such as Ins(3,4,5,6)P4 or Ins(1,3,4)P3 and participates in phytic acid biosynthesis in developing seeds. Phosphorylates Ins(3,4,5,6)P4 at position 1 to form Ins(1,3,4,5,6)P5. This reaction is thought to have regulatory importance, since Ins(3,4,5,6)P4 is an inhibitor of plasma membrane Ca(2+)-activated Cl(-) channels, while Ins(1,3,4,5,6)P5 is not. Also phosphorylates Ins(1,3,4)P3 on O-5 and O-6 to form Ins(1,3,4,6)P4, an essential molecule in the hexakisphosphate (InsP6) pathway. Also able to phosphorylate Ins(3,5,6)P3 but not Ins(1,4,5)P3, Ins(2,4,5)P3, Ins(1,3,4,6)P4 nor Ins(1,3,5,6)P4. Has higher specific activity on Ins(3,4,5,6)P4 than Ins(1,3,4)P3 and Ins(3,5,6)P3. Can also could use Ins(1,2,5,6)P4 as a substrate. Able to add a beta-phosphate to the 3 positions of Ins(1,2,3,4,5)P5 and to add beta-phosphate to InsP6 to yield 5-InsP7, thus exhibiting InsP6 kinase activity. Also has Ins(1,3,4,5,6)P5 phosphatase activity. This Zea mays (Maize) protein is Inositol-tetrakisphosphate 1-kinase 1.